Here is a 937-residue protein sequence, read N- to C-terminus: MFPTRLARLLLAVALTLPGALCGEGALGKSSMARCSLFGADFINTFDESMYSFSGDCSYLLAGDCKTHSFSIVGDFQGGRRMGLSVYLGEFFDIHVFVNGTVLQGGQHVSMPYATRGLYLETEVGHHKLSSESYGFVARIDGSGNFQILLSDRHFNKTCGLCGDFNIFAEDDFRTQEGTLTSDPYDFANSWALSSEEQRCPRVSPPSSSCNVSSELQKGLWEKCQLLKTASVFARCHALVDPEPFVALCERMLCACAQGLRCPCPVLLEYARACAKQGMLLYGWADHSSCRPDCPTGMEYKECVSPCHRTCRSLSITEVCREQCVDGCSCPEGQLLDEGRCVESTECPCVHAGKPYPPGASLSRDCNTCICRNSQWVCSNEDCPGECLITGQSHFKSFDDRHFTFSGVCQYLLAQDCQDHSFSVVIETVQCADDPDAVCTRSVTVRLPSPHHGLLKLKHGGGVALDGQDVQIPLLQGDLRIQHTVTASLQLNFGEDLQIDWDGRGRLLLKLSPVYAGRTCGLCGNYNGNQRDDFLTPAGLVEPLVEHFGNSWKLRADCEDLQEQPSDPCSLNPRLTKFADQACAILTSPKFEACHSAVSPLPYLRNCRYDVCACSDGRDCLCDAVANYAAACARRGVHVGWREPSFCALSCPHGQVYQQCGTPCNLTCRSLSHPDEECTEVCLEGCFCPPGLFLDETGSCVPKAQCPCYYDGEIFQPEDIFSDHHTMCYCEDGFMHSATSGAPGSLLPEAVLSSPLSHRSKRSLSCRPPMVKVVCPADNPRAEGLECTKTCQNYDLECMSTGCVSGCLPAPGMVRHENRCVALERCPCFHQGREYAPGDRVKVDCNSCVCQDRKWNCTDHVCDASCSALGLAHYFTFDGLKYLFPGECQYVLVQDHCGSNPGTFRVLVGNEGCSVPSLKCRKRITILVEGGEIELFD.

The N-terminal stretch at M1–C22 is a signal peptide. Positions G23–R762 are excised as a propeptide. The region spanning A33 to P201 is the VWFD 1 domain. Cystine bridges form between C35-C162 and C57-C200. N-linked (GlcNAc...) asparagine glycosylation is found at N99, N156, and N211. Residues C294–C347 enclose the TIL 1 domain. The region spanning G385–E559 is the VWFD 2 domain. Cystine bridges form between C387-C523, C409-C558, and C431-C439. The TIL 2 domain occupies C651–C706. The N-linked (GlcNAc...) asparagine glycan is linked to N665. Positions S763 to E786 are amino-terminal. Intrachain disulfides connect C766-C807 and C775-C803. Positions C787 to G832 are E1. Residues R825–D852 form a CX region. N856 is a glycosylation site (N-linked (GlcNAc...) asparagine). The region spanning A864–D937 is the VWFD 3 domain. Cysteines 913 and 920 form a disulfide.

Multimeric. Interacts with F8. Post-translationally, all cysteine residues are involved in intrachain or interchain disulfide bonds. N- and O-glycosylated. As to expression, plasma.

It localises to the secreted. The protein resides in the extracellular space. Its subcellular location is the extracellular matrix. Functionally, important in the maintenance of hemostasis, it promotes adhesion of platelets to the sites of vascular injury by forming a molecular bridge between sub-endothelial collagen matrix and platelet-surface receptor complex GPIb-IX-V. Also acts as a chaperone for coagulation factor VIII, delivering it to the site of injury, stabilizing its heterodimeric structure and protecting it from premature clearance from plasma. This Bos taurus (Bovine) protein is von Willebrand factor (VWF).